Reading from the N-terminus, the 800-residue chain is Elongation factor G, mitochondrial (800 aa).

Residues 1–59 (MRVIRAVATLHAGRAAAVRQGVRSVSLGACRAAVETPSLRSAGSQFESRRLFSRSSYLR) constitute a mitochondrion transit peptide. The tr-type G domain occupies 99 to 385 (ARVRNIGIAA…AVCDYLPNPN (287 aa)). GTP-binding positions include 108 to 115 (AHIDSGKT), 183 to 187 (DTPGH), and 237 to 240 (NKMD).

The protein belongs to the TRAFAC class translation factor GTPase superfamily. Classic translation factor GTPase family. EF-G/EF-2 subfamily.

It is found in the mitochondrion. It participates in protein biosynthesis; polypeptide chain elongation. Its function is as follows. Mitochondrial GTPase that catalyzes the GTP-dependent ribosomal translocation step during translation elongation. During this step, the ribosome changes from the pre-translocational (PRE) to the post-translocational (POST) state as the newly formed A-site-bound peptidyl-tRNA and P-site-bound deacylated tRNA move to the P and E sites, respectively. Catalyzes the coordinated movement of the two tRNA molecules, the mRNA and conformational changes in the ribosome. This Neurospora crassa (strain ATCC 24698 / 74-OR23-1A / CBS 708.71 / DSM 1257 / FGSC 987) protein is Elongation factor G, mitochondrial (mef1).